A 262-amino-acid chain; its full sequence is Adenosylcobinamide-GDP ribazoletransferase (262 aa).

The next 8 helical transmembrane spans lie at 4 to 26 (AWNG…SIAW), 37 to 57 (CMPL…ALFS), 59 to 79 (FSFS…IWMA), 112 to 132 (VGAF…LFLY), 139 to 159 (IPPA…AWLL), 183 to 203 (AIWA…STAI), 205 to 225 (VQTG…AKPW), and 237 to 257 (VLGA…WLLH).

Belongs to the CobS family. Requires Mg(2+) as cofactor.

The protein localises to the cell membrane. The catalysed reaction is alpha-ribazole + adenosylcob(III)inamide-GDP = adenosylcob(III)alamin + GMP + H(+). It catalyses the reaction alpha-ribazole 5'-phosphate + adenosylcob(III)inamide-GDP = adenosylcob(III)alamin 5'-phosphate + GMP + H(+). Its pathway is cofactor biosynthesis; adenosylcobalamin biosynthesis; adenosylcobalamin from cob(II)yrinate a,c-diamide: step 7/7. In terms of biological role, joins adenosylcobinamide-GDP and alpha-ribazole to generate adenosylcobalamin (Ado-cobalamin). Also synthesizes adenosylcobalamin 5'-phosphate from adenosylcobinamide-GDP and alpha-ribazole 5'-phosphate. This Geobacillus kaustophilus (strain HTA426) protein is Adenosylcobinamide-GDP ribazoletransferase.